We begin with the raw amino-acid sequence, 318 residues long: Melanoma-associated antigen 8 (318 aa).

The tract at residues methionine 1–histidine 103 is disordered. One can recognise an MAGE domain in the interval leucine 112 to alanine 311.

In terms of tissue distribution, expressed in many tumors of several types, such as melanoma, head and neck squamous cell carcinoma, lung carcinoma and breast carcinoma, but not in normal tissues except for testis and placenta.

Its function is as follows. Not known, though may play a role in embryonal development and tumor transformation or aspects of tumor progression. This Homo sapiens (Human) protein is Melanoma-associated antigen 8 (MAGEA8).